Reading from the N-terminus, the 28-residue chain is Fibrinogen alpha chain (28 aa).

The residue at position 3 (Ser-3) is a Phosphoserine.

As to quaternary structure, heterohexamer; disulfide linked. Contains 2 sets of 3 non-identical chains (alpha, beta and gamma). The 2 heterotrimers are in head to head conformation with the N-termini in a small central domain. Conversion of fibrinogen to fibrin is triggered by thrombin, which cleaves fibrinopeptides A and B from alpha and beta chains, and thus exposes the N-terminal polymerization sites responsible for the formation of the soft clot. The soft clot is converted into the hard clot by factor XIIIA which catalyzes the epsilon-(gamma-glutamyl)lysine cross-linking between gamma chains (stronger) and between alpha chains (weaker) of different monomers. In terms of processing, forms F13A-mediated cross-links between a glutamine and the epsilon-amino group of a lysine residue, forming fibronectin-fibrinogen heteropolymers.

It is found in the secreted. Cleaved by the protease thrombin to yield monomers which, together with fibrinogen beta (FGB) and fibrinogen gamma (FGG), polymerize to form an insoluble fibrin matrix. Fibrin has a major function in hemostasis as one of the primary components of blood clots. In addition, functions during the early stages of wound repair to stabilize the lesion and guide cell migration during re-epithelialization. Was originally thought to be essential for platelet aggregation, based on in vitro studies using anticoagulated blood. However, subsequent studies have shown that it is not absolutely required for thrombus formation in vivo. Enhances expression of SELP in activated platelets via an ITGB3-dependent pathway. Maternal fibrinogen is essential for successful pregnancy. Fibrin deposition is also associated with infection, where it protects against IFNG-mediated hemorrhage. May also facilitate the immune response via both innate and T-cell mediated pathways. This Canis lupus familiaris (Dog) protein is Fibrinogen alpha chain (FGA).